The chain runs to 154 residues: 20 kDa calcium-binding protein (154 aa).

EF-hand domains lie at Asp13–Thr48, Val49–Glu84, Gln86–Asp121, and Leu122–Glu154. 11 residues coordinate Ca(2+): Asp62, Asp64, Thr66, Asp99, Asn101, Glu105, Asp110, Asp135, Asp137, Ser139, and Glu146.

Its subcellular location is the tegument membrane. Calcium-binding protein. The sequence is that of 20 kDa calcium-binding protein (SM20) from Schistosoma mansoni (Blood fluke).